Consider the following 216-residue polypeptide: Eukaryotic translation initiation factor 3 subunit K (216 aa).

A PCI domain is found at Tyr-40 to Lys-202.

This sequence belongs to the eIF-3 subunit K family. In terms of assembly, component of the eukaryotic translation initiation factor 3 (eIF-3) complex.

It is found in the cytoplasm. In terms of biological role, component of the eukaryotic translation initiation factor 3 (eIF-3) complex, which is involved in protein synthesis of a specialized repertoire of mRNAs and, together with other initiation factors, stimulates binding of mRNA and methionyl-tRNAi to the 40S ribosome. The eIF-3 complex specifically targets and initiates translation of a subset of mRNAs involved in cell proliferation. This is Eukaryotic translation initiation factor 3 subunit K from Nematostella vectensis (Starlet sea anemone).